The primary structure comprises 88 residues: Small ribosomal subunit protein uS15 (88 aa).

The protein belongs to the universal ribosomal protein uS15 family. As to quaternary structure, part of the 30S ribosomal subunit. Forms a bridge to the 50S subunit in the 70S ribosome, contacting the 23S rRNA.

Its function is as follows. One of the primary rRNA binding proteins, it binds directly to 16S rRNA where it helps nucleate assembly of the platform of the 30S subunit by binding and bridging several RNA helices of the 16S rRNA. In terms of biological role, forms an intersubunit bridge (bridge B4) with the 23S rRNA of the 50S subunit in the ribosome. The polypeptide is Small ribosomal subunit protein uS15 (Borrelia hermsii (strain HS1 / DAH)).